The sequence spans 155 residues: uncharacterized protein (155 aa).

The N-terminal stretch at 1-23 is a signal peptide; the sequence is MTILSLSRFMLAGVLLASFNASA.

To E.coli YfjT.

This is an uncharacterized protein from Escherichia coli (strain K12).